The sequence spans 70 residues: Small ribosomal subunit protein bS21 (70 aa).

The interval 39 to 70 is disordered; the sequence is EKPTTERKRKKAAAVSRTRKRLRSQMLPKKLY. The span at 45–61 shows a compositional bias: basic residues; that stretch reads RKRKKAAAVSRTRKRLR.

It belongs to the bacterial ribosomal protein bS21 family.

In Ralstonia nicotianae (strain ATCC BAA-1114 / GMI1000) (Ralstonia solanacearum), this protein is Small ribosomal subunit protein bS21.